A 299-amino-acid polypeptide reads, in one-letter code: Phosphate import ATP-binding protein PstB 1 (299 aa).

Residues 1–51 are disordered; sequence MTENEMTSNDSTEPTPTTETAASSPDPSGDPLIEQSIDVEGTDSTAAETGK. Residues 10 to 27 show a composition bias toward low complexity; that stretch reads DSTEPTPTTETAASSPDP. One can recognise an ABC transporter domain in the interval 54-294; it reads IESSDLNVFY…PESQRVEDYI (241 aa). Residue 86–93 participates in ATP binding; it reads GPSGCGKS.

Belongs to the ABC transporter superfamily. Phosphate importer (TC 3.A.1.7) family. As to quaternary structure, the complex is composed of two ATP-binding proteins (PstB), two transmembrane proteins (PstC and PstA) and a solute-binding protein (PstS).

The protein localises to the cell membrane. The catalysed reaction is phosphate(out) + ATP + H2O = ADP + 2 phosphate(in) + H(+). Its function is as follows. Part of the ABC transporter complex PstSACB involved in phosphate import. Responsible for energy coupling to the transport system. This chain is Phosphate import ATP-binding protein PstB 1, found in Haloarcula marismortui (strain ATCC 43049 / DSM 3752 / JCM 8966 / VKM B-1809) (Halobacterium marismortui).